The primary structure comprises 160 residues: MAKSKNHTTHNQSRKWHRNGIKKPRSQRYESLKGVDPKFLRNMRFAKKHNKKGLKKMQANNAKAMSARAEAIKALVKPKEVKPNIPKGGSRKLSRLAYIAHPKLGKRARARIAKGLRFCRPKSQAKAQSKAKATAGGTAAAPVPPASAPKGAQAPTKAPQ.

The segment covering 1–26 has biased composition (basic residues); sequence MAKSKNHTTHNQSRKWHRNGIKKPRS. A disordered region spans residues 1–32; the sequence is MAKSKNHTTHNQSRKWHRNGIKKPRSQRYESL. Lysine 5 carries the N6-methyllysine modification. The residue at position 31 (serine 31) is a Phosphoserine. Lysine 33 carries the N6-acetyllysine modification. The interval 119 to 160 is disordered; it reads CRPKSQAKAQSKAKATAGGTAAAPVPPASAPKGAQAPTKAPQ. A compositionally biased stretch (low complexity) spans 121-141; it reads PKSQAKAQSKAKATAGGTAAA.

The protein belongs to the eukaryotic ribosomal protein eL29 family. As to quaternary structure, component of the large ribosomal subunit.

The protein resides in the cytoplasm. In terms of biological role, component of the large ribosomal subunit. The ribosome is a large ribonucleoprotein complex responsible for the synthesis of proteins in the cell. This Sus scrofa (Pig) protein is Large ribosomal subunit protein eL29 (RPL29).